The following is a 695-amino-acid chain: Elongation factor G 2 (695 aa).

The tr-type G domain occupies 5-280 (SKYRNIGIFA…AVVDYLPSPT (276 aa)). Residues 14-21 (AHVDAGKT), 78-82 (DTPGH), and 132-135 (NKLD) each bind GTP.

It belongs to the TRAFAC class translation factor GTPase superfamily. Classic translation factor GTPase family. EF-G/EF-2 subfamily.

It localises to the cytoplasm. Functionally, catalyzes the GTP-dependent ribosomal translocation step during translation elongation. During this step, the ribosome changes from the pre-translocational (PRE) to the post-translocational (POST) state as the newly formed A-site-bound peptidyl-tRNA and P-site-bound deacylated tRNA move to the P and E sites, respectively. Catalyzes the coordinated movement of the two tRNA molecules, the mRNA and conformational changes in the ribosome. The polypeptide is Elongation factor G 2 (Photobacterium profundum (strain SS9)).